The chain runs to 953 residues: UvrABC system protein A (953 aa).

Residue 33 to 40 (GLSGSGKS) participates in ATP binding. 2 ABC transporter domains span residues 320-599 (WGST…EESI) and 619-949 (GHDN…RYLK). 652–659 (GVSGSGKS) is a binding site for ATP. The segment at 752–778 (CEACQGDGLIKIEMHFLPDVYVKCDIC) adopts a C4-type zinc-finger fold.

This sequence belongs to the ABC transporter superfamily. UvrA family. As to quaternary structure, forms a heterotetramer with UvrB during the search for lesions.

It localises to the cytoplasm. In terms of biological role, the UvrABC repair system catalyzes the recognition and processing of DNA lesions. UvrA is an ATPase and a DNA-binding protein. A damage recognition complex composed of 2 UvrA and 2 UvrB subunits scans DNA for abnormalities. When the presence of a lesion has been verified by UvrB, the UvrA molecules dissociate. This is UvrABC system protein A from Rickettsia bellii (strain RML369-C).